A 179-amino-acid chain; its full sequence is MNRLKEKYVKEITPALVSKFEYKSVMQVPKIEKIVINMGVGDAVQNAKAIDTAVEELTFIAGQKPVVTRAKKSIAGFRLREGMPIGAKVTLRGERMYDFLDKLISVSLPRVRDFRGISKKSFDGRGNYTLGIKEQLIFPEIDYDKVTKVRGMDIVIVTTANTDEEARELLTQVGMPFQK.

It belongs to the universal ribosomal protein uL5 family. As to quaternary structure, part of the 50S ribosomal subunit; part of the 5S rRNA/L5/L18/L25 subcomplex. Contacts the 5S rRNA and the P site tRNA. Forms a bridge to the 30S subunit in the 70S ribosome.

Functionally, this is one of the proteins that bind and probably mediate the attachment of the 5S RNA into the large ribosomal subunit, where it forms part of the central protuberance. In the 70S ribosome it contacts protein S13 of the 30S subunit (bridge B1b), connecting the 2 subunits; this bridge is implicated in subunit movement. Contacts the P site tRNA; the 5S rRNA and some of its associated proteins might help stabilize positioning of ribosome-bound tRNAs. This is Large ribosomal subunit protein uL5 from Bacillus pumilus (strain SAFR-032).